A 471-amino-acid chain; its full sequence is MLRALLPSTTLALILAGGGHAAVGDAFPAFAVLCAAWDAATNKQIKPWSEDRELPELNDIYNMNMSIASEEWQTIFDGQAEQQTWSQFAQANAGKYKGIDWKQNWDRWRKQRQQTKDAGGAWQTKNHRPEWAATPRDVRPVILAIAEEATELSRKLEPPRTADGKDLIAEINSKLASARCSGELKAAAGNIGCTGPEGTPDKTTTCTTAKAGGSIGHDMLCLCSVAEATDKCSSTGVGDAVPNSGEKLRSNGFQHIVARCPKGPESGTLPQAIDLALAMLATALGTQQPGSNNMILGKSGGGTCTATNSACVDYHEKFSKQQAGITGIPWVALLQQARALYGTYVDAKLAAQTARQQIVMLAGQAKREYRRPAGSLKDPAGVIQEQATNRRRHGADDTNQCTSNNATADECPETRCEYDSEKNECRPKKGTETTATGPGERTTPADGKANNTVSDSLLIKTSPLWLAFLLF.

The first 21 residues, Met-1–Ala-21, serve as a signal peptide directing secretion. 2 N-linked (GlcNAc...) asparagine glycosylation sites follow: Asn-64 and Asn-405. The interval Ala-406–Ala-449 is disordered. A compositionally biased stretch (basic and acidic residues) spans Pro-412–Thr-431. A glycan (N-linked (GlcNAc...) asparagine) is linked at Asn-450. A lipid anchor (GPI-anchor amidated serine) is attached at Ser-454. Positions Asp-455–Phe-471 are cleaved as a propeptide — removed in mature form.

The protein resides in the cell membrane. In terms of biological role, VSG forms a coat on the surface of the parasite. The trypanosome evades the immune response of the host by expressing a series of antigenically distinct VSGs from an estimated 1000 VSG genes. The protein is Variant surface glycoprotein ILTAT 1.21 of Trypanosoma brucei brucei.